A 336-amino-acid chain; its full sequence is Biotin synthase (336 aa).

Residues 55–288 (GEAASLHACS…RTIIKFAAGR (234 aa)) enclose the Radical SAM core domain. The [4Fe-4S] cluster site is built by cysteine 73, cysteine 77, and cysteine 80. Residues cysteine 152, cysteine 213, and lysine 283 each contribute to the [2Fe-2S] cluster site.

Belongs to the radical SAM superfamily. Biotin synthase family. As to quaternary structure, homodimer. [4Fe-4S] cluster serves as cofactor. Requires [2Fe-2S] cluster as cofactor.

The enzyme catalyses (4R,5S)-dethiobiotin + (sulfur carrier)-SH + 2 reduced [2Fe-2S]-[ferredoxin] + 2 S-adenosyl-L-methionine = (sulfur carrier)-H + biotin + 2 5'-deoxyadenosine + 2 L-methionine + 2 oxidized [2Fe-2S]-[ferredoxin]. The protein operates within cofactor biosynthesis; biotin biosynthesis; biotin from 7,8-diaminononanoate: step 2/2. In terms of biological role, catalyzes the conversion of dethiobiotin (DTB) to biotin by the insertion of a sulfur atom into dethiobiotin via a radical-based mechanism. The sequence is that of Biotin synthase from Chlorobium limicola (strain DSM 245 / NBRC 103803 / 6330).